We begin with the raw amino-acid sequence, 94 residues long: Potassium channel protein kcv (94 aa).

Residues 14-34 (FMIHLFILAMFVMIYKFFPGG) form a helical membrane-spanning segment. N-linked (GlcNAc...) asparagine; by host glycosylation is present at Asn38. Residues 74-94 (TGAKLCTIAHIVTVFFIVLTL) form a helical membrane-spanning segment.

The protein belongs to the two pore domain potassium channel (TC 1.A.1.12) family.

It localises to the membrane. In terms of biological role, potassium-selective channel essential in the virus replication cycle. May be involved in preventing multiple infections (Potential). The protein is Potassium channel protein kcv (A250R) of Paramecium bursaria Chlorella virus 1 (PBCV-1).